Reading from the N-terminus, the 140-residue chain is Cell division protein SepF (140 aa).

A disordered region spans residues 15 to 47 (DSQYEEPTEASQAAAPTESATNTRSTPKVVPMQ).

Belongs to the SepF family. As to quaternary structure, homodimer. Interacts with FtsZ.

It localises to the cytoplasm. Its function is as follows. Cell division protein that is part of the divisome complex and is recruited early to the Z-ring. Probably stimulates Z-ring formation, perhaps through the cross-linking of FtsZ protofilaments. Its function overlaps with FtsA. This Lactiplantibacillus plantarum (strain ATCC BAA-793 / NCIMB 8826 / WCFS1) (Lactobacillus plantarum) protein is Cell division protein SepF.